An 80-amino-acid chain; its full sequence is Exodeoxyribonuclease 7 small subunit (80 aa).

It belongs to the XseB family. As to quaternary structure, heterooligomer composed of large and small subunits.

Its subcellular location is the cytoplasm. It catalyses the reaction Exonucleolytic cleavage in either 5'- to 3'- or 3'- to 5'-direction to yield nucleoside 5'-phosphates.. Bidirectionally degrades single-stranded DNA into large acid-insoluble oligonucleotides, which are then degraded further into small acid-soluble oligonucleotides. This chain is Exodeoxyribonuclease 7 small subunit, found in Pseudomonas paraeruginosa (strain DSM 24068 / PA7) (Pseudomonas aeruginosa (strain PA7)).